A 303-amino-acid chain; its full sequence is Putative deoxyribose-phosphate aldolase (303 aa).

The active-site Proton donor/acceptor is aspartate 157. Catalysis depends on lysine 220, which acts as the Schiff-base intermediate with acetaldehyde. The active-site Proton donor/acceptor is the lysine 256.

This sequence belongs to the DeoC/FbaB aldolase family. DeoC type 2 subfamily.

The catalysed reaction is 2-deoxy-D-ribose 5-phosphate = D-glyceraldehyde 3-phosphate + acetaldehyde. The protein operates within carbohydrate degradation; 2-deoxy-D-ribose 1-phosphate degradation; D-glyceraldehyde 3-phosphate and acetaldehyde from 2-deoxy-alpha-D-ribose 1-phosphate: step 2/2. In terms of biological role, catalyzes a reversible aldol reaction between acetaldehyde and D-glyceraldehyde 3-phosphate to generate 2-deoxy-D-ribose 5-phosphate. The chain is Putative deoxyribose-phosphate aldolase from Caenorhabditis elegans.